Reading from the N-terminus, the 215-residue chain is Cytochrome b6 (215 aa).

Residues 32–52 (IFYCLGGITLTCFLVQVATGF) traverse the membrane as a helical segment. Cys35 is a heme c binding site. Heme b is bound by residues His86 and His100. A run of 3 helical transmembrane segments spans residues 90–110 (ASMMVLMMILHVFRVYLTGGF), 116–136 (LTWVTGVILSVITVSFGVTGY), and 186–206 (LHTFVLPLLAAVFMLMHFLMI). Heme b contacts are provided by His187 and His202.

This sequence belongs to the cytochrome b family. PetB subfamily. In terms of assembly, the 4 large subunits of the cytochrome b6-f complex are cytochrome b6, subunit IV (17 kDa polypeptide, PetD), cytochrome f and the Rieske protein, while the 4 small subunits are PetG, PetL, PetM and PetN. The complex functions as a dimer. It depends on heme b as a cofactor. Heme c serves as cofactor.

It is found in the plastid. It localises to the chloroplast thylakoid membrane. Component of the cytochrome b6-f complex, which mediates electron transfer between photosystem II (PSII) and photosystem I (PSI), cyclic electron flow around PSI, and state transitions. This Ostreococcus tauri protein is Cytochrome b6.